The following is a 293-amino-acid chain: NAD kinase (293 aa).

Catalysis depends on Asp-72, which acts as the Proton acceptor. NAD(+)-binding positions include 72–73, 146–147, Arg-157, Lys-174, Asp-176, 187–192, and Gln-247; these read DG, ND, and TAYALS.

This sequence belongs to the NAD kinase family. A divalent metal cation is required as a cofactor.

The protein resides in the cytoplasm. The catalysed reaction is NAD(+) + ATP = ADP + NADP(+) + H(+). Involved in the regulation of the intracellular balance of NAD and NADP, and is a key enzyme in the biosynthesis of NADP. Catalyzes specifically the phosphorylation on 2'-hydroxyl of the adenosine moiety of NAD to yield NADP. The chain is NAD kinase from Marinomonas sp. (strain MWYL1).